A 543-amino-acid chain; its full sequence is Chaperonin GroEL 2 (543 aa).

ATP is bound by residues Thr29–Pro32, Asp86–Thr90, Gly413, Asn478–Ala480, and Asp494.

This sequence belongs to the chaperonin (HSP60) family. Forms a cylinder of 14 subunits composed of two heptameric rings stacked back-to-back. Interacts with the co-chaperonin GroES.

Its subcellular location is the cytoplasm. It catalyses the reaction ATP + H2O + a folded polypeptide = ADP + phosphate + an unfolded polypeptide.. Its function is as follows. Together with its co-chaperonin GroES, plays an essential role in assisting protein folding. The GroEL-GroES system forms a nano-cage that allows encapsulation of the non-native substrate proteins and provides a physical environment optimized to promote and accelerate protein folding. This is Chaperonin GroEL 2 from Thermosynechococcus vestitus (strain NIES-2133 / IAM M-273 / BP-1).